The chain runs to 194 residues: Potassium-transporting ATPase KdpC subunit (194 aa).

A helical transmembrane segment spans residues 12 to 34 (LFLLLLTGGVYPLLTTALGQWWF).

The protein belongs to the KdpC family. As to quaternary structure, the system is composed of three essential subunits: KdpA, KdpB and KdpC.

Its subcellular location is the cell inner membrane. In terms of biological role, part of the high-affinity ATP-driven potassium transport (or Kdp) system, which catalyzes the hydrolysis of ATP coupled with the electrogenic transport of potassium into the cytoplasm. This subunit acts as a catalytic chaperone that increases the ATP-binding affinity of the ATP-hydrolyzing subunit KdpB by the formation of a transient KdpB/KdpC/ATP ternary complex. In Salmonella enteritidis PT4 (strain P125109), this protein is Potassium-transporting ATPase KdpC subunit.